Consider the following 474-residue polypeptide: Chromosomal replication initiator protein DnaA (474 aa).

The segment at 1–73 (MTNIEQERWS…LSCWQAEMPE (73 aa)) is domain I, interacts with DnaA modulators. The interval 73–130 (EVHRIDLTVRTAMRCAAPAKEQAAPIEPRREDNRAAAHDLRVSATAPVSANHEALGGS) is domain II. Residues 131-353 (PLDPRLTFSS…GAINRLLAHS (223 aa)) are domain III, AAA+ region. Glycine 178, glycine 180, lysine 181, and threonine 182 together coordinate ATP. The segment at 354–474 (KLNAQPVTLE…VESLKRQLQE (121 aa)) is domain IV, binds dsDNA.

The protein belongs to the DnaA family. In terms of assembly, oligomerizes as a right-handed, spiral filament on DNA at oriC.

The protein localises to the cytoplasm. Plays an essential role in the initiation and regulation of chromosomal replication. ATP-DnaA binds to the origin of replication (oriC) to initiate formation of the DNA replication initiation complex once per cell cycle. Binds the DnaA box (a 9 base pair repeat at the origin) and separates the double-stranded (ds)DNA. Forms a right-handed helical filament on oriC DNA; dsDNA binds to the exterior of the filament while single-stranded (ss)DNA is stabiized in the filament's interior. The ATP-DnaA-oriC complex binds and stabilizes one strand of the AT-rich DNA unwinding element (DUE), permitting loading of DNA polymerase. After initiation quickly degrades to an ADP-DnaA complex that is not apt for DNA replication. Binds acidic phospholipids. This chain is Chromosomal replication initiator protein DnaA, found in Rhodopseudomonas palustris (strain BisA53).